Here is a 77-residue protein sequence, read N- to C-terminus: Translation initiation factor IF-1, chloroplastic (77 aa).

The 71-residue stretch at 1-71 folds into the S1-like domain; the sequence is MKEQKWIHEG…TRGRIIYRLR (71 aa).

It belongs to the IF-1 family. In terms of assembly, component of the 30S ribosomal translation pre-initiation complex which assembles on the 30S ribosome in the order IF-2 and IF-3, IF-1 and N-formylmethionyl-tRNA(fMet); mRNA recruitment can occur at any time during PIC assembly.

The protein localises to the plastid. Its subcellular location is the chloroplast. Functionally, one of the essential components for the initiation of protein synthesis. Stabilizes the binding of IF-2 and IF-3 on the 30S subunit to which N-formylmethionyl-tRNA(fMet) subsequently binds. Helps modulate mRNA selection, yielding the 30S pre-initiation complex (PIC). Upon addition of the 50S ribosomal subunit IF-1, IF-2 and IF-3 are released leaving the mature 70S translation initiation complex. The chain is Translation initiation factor IF-1, chloroplastic from Lactuca sativa (Garden lettuce).